The primary structure comprises 112 residues: CRISPR-associated endoribonuclease Cas2 2 (112 aa).

Asp-15 serves as a coordination point for Mg(2+).

It belongs to the CRISPR-associated endoribonuclease Cas2 protein family. In terms of assembly, homodimer, forms a heterotetramer with a Cas1 homodimer. Requires Mg(2+) as cofactor.

In terms of biological role, CRISPR (clustered regularly interspaced short palindromic repeat), is an adaptive immune system that provides protection against mobile genetic elements (viruses, transposable elements and conjugative plasmids). CRISPR clusters contain sequences complementary to antecedent mobile elements and target invading nucleic acids. CRISPR clusters are transcribed and processed into CRISPR RNA (crRNA). Functions as a ssRNA-specific endoribonuclease. Involved in the integration of spacer DNA into the CRISPR cassette. The chain is CRISPR-associated endoribonuclease Cas2 2 from Rhodospirillum rubrum (strain ATCC 11170 / ATH 1.1.1 / DSM 467 / LMG 4362 / NCIMB 8255 / S1).